We begin with the raw amino-acid sequence, 892 residues long: Alanine--tRNA ligase (892 aa).

His574, His578, Cys676, and His680 together coordinate Zn(2+).

This sequence belongs to the class-II aminoacyl-tRNA synthetase family. It depends on Zn(2+) as a cofactor.

The protein localises to the cytoplasm. It carries out the reaction tRNA(Ala) + L-alanine + ATP = L-alanyl-tRNA(Ala) + AMP + diphosphate. In terms of biological role, catalyzes the attachment of alanine to tRNA(Ala) in a two-step reaction: alanine is first activated by ATP to form Ala-AMP and then transferred to the acceptor end of tRNA(Ala). Also edits incorrectly charged Ser-tRNA(Ala) and Gly-tRNA(Ala) via its editing domain. In Prochlorococcus marinus (strain MIT 9313), this protein is Alanine--tRNA ligase.